We begin with the raw amino-acid sequence, 348 residues long: Holliday junction branch migration complex subunit RuvB (348 aa).

Positions Asp-3–Tyr-183 are large ATPase domain (RuvB-L). Residues Leu-22, Arg-23, Gly-64, Lys-67, Thr-68, Ser-69, Glu-130–Phe-132, Arg-173, Tyr-183, and Arg-220 each bind ATP. Thr-68 is a Mg(2+) binding site. The small ATPAse domain (RuvB-S) stretch occupies residues Asp-184–Asp-254. The segment at Gly-257–Glu-348 is head domain (RuvB-H). DNA contacts are provided by Arg-312 and Arg-317.

Belongs to the RuvB family. In terms of assembly, homohexamer. Forms an RuvA(8)-RuvB(12)-Holliday junction (HJ) complex. HJ DNA is sandwiched between 2 RuvA tetramers; dsDNA enters through RuvA and exits via RuvB. An RuvB hexamer assembles on each DNA strand where it exits the tetramer. Each RuvB hexamer is contacted by two RuvA subunits (via domain III) on 2 adjacent RuvB subunits; this complex drives branch migration. In the full resolvosome a probable DNA-RuvA(4)-RuvB(12)-RuvC(2) complex forms which resolves the HJ.

The protein localises to the cytoplasm. The catalysed reaction is ATP + H2O = ADP + phosphate + H(+). Functionally, the RuvA-RuvB-RuvC complex processes Holliday junction (HJ) DNA during genetic recombination and DNA repair, while the RuvA-RuvB complex plays an important role in the rescue of blocked DNA replication forks via replication fork reversal (RFR). RuvA specifically binds to HJ cruciform DNA, conferring on it an open structure. The RuvB hexamer acts as an ATP-dependent pump, pulling dsDNA into and through the RuvAB complex. RuvB forms 2 homohexamers on either side of HJ DNA bound by 1 or 2 RuvA tetramers; 4 subunits per hexamer contact DNA at a time. Coordinated motions by a converter formed by DNA-disengaged RuvB subunits stimulates ATP hydrolysis and nucleotide exchange. Immobilization of the converter enables RuvB to convert the ATP-contained energy into a lever motion, pulling 2 nucleotides of DNA out of the RuvA tetramer per ATP hydrolyzed, thus driving DNA branch migration. The RuvB motors rotate together with the DNA substrate, which together with the progressing nucleotide cycle form the mechanistic basis for DNA recombination by continuous HJ branch migration. Branch migration allows RuvC to scan DNA until it finds its consensus sequence, where it cleaves and resolves cruciform DNA. The chain is Holliday junction branch migration complex subunit RuvB from Frankia casuarinae (strain DSM 45818 / CECT 9043 / HFP020203 / CcI3).